We begin with the raw amino-acid sequence, 634 residues long: Coilin (634 aa).

Disordered regions lie at residues 87–135, 149–276, and 342–361; these read VSPA…IAEN, PGPS…KLSQ, and GAKS…DSTL. The span at 152–181 shows a compositional bias: polar residues; the sequence is SVQSKLLTNKGTPKAPETQTEVSNMSANIE. Composition is skewed to basic and acidic residues over residues 223 to 234 and 251 to 272; these read TLKEGKMSESKN and KENE…KIPD.

Belongs to the coilin family. As to expression, in egg chambers expressed in the follicle cells, nurse cells and oocyte. Expressed in the larval brain, salivary glands, fat bodies and in the somatic hub cells at the tip of the testis. Expressed in the spermatogonia and spermatocytes, and in the adult ejaculatory duct (at protein level). Expressed in the adult Malpighian tubules.

The protein resides in the nucleus. It localises to the nucleoplasm. It is found in the cajal body. The protein localises to the chromosome. Its subcellular location is the centromere. The protein resides in the cytoplasm. It localises to the cytoskeleton. It is found in the spindle. Functionally, component of nuclear coiled bodies, also known as Cajal bodies or CBs, which are involved in the modification and assembly of nucleoplasmic snRNPs. Required for Cajal body formation. This chain is Coilin, found in Drosophila melanogaster (Fruit fly).